The chain runs to 932 residues: Receptor-like protein 9a (932 aa).

A signal peptide spans 1-28 (MLIFTIPQFFFAAWVMVVSLQMQGYISC). At 29 to 888 (IEKERKGLLE…DDETAIDMET (860 aa)) the chain is on the extracellular side. 3 N-linked (GlcNAc...) asparagine glycosylation sites follow: asparagine 53, asparagine 80, and asparagine 90. LRR repeat units follow at residues 97-122 (FEELRTLNLYDFGCTGWFDDIHGYKS), 126-152 (LKKLEILDMGNNEVNNSVLPFLNAASS), 154-174 (RTLILHGNNMEGTFPMKELKD), 175-200 (LSNLELLDLSGNLLNGPVPGLAVLHK), 202-222 (HALDLSDNTFSGSLGREGLCQ), 223-246 (LKNLQELDLSQNEFTGPFPQCFSS), 247-273 (LTQLQVLDMSSNQFNGTLPSVISNLDS), 275-295 (EYLSLSDNKFEGFFSFDLIAN), 296-320 (LSKLKVFKLSSKSSLLHIESEISLQ), 322-345 (KFRLSVIDLKYCNLEAVPSFLQQQ), 346-368 (KDLRLINLSNNKLTGISPSWFLE), 370-393 (YPKLRVLLLWNNSFTIFHLPRLLV), 394-417 (HSLHVLDLSVNKFDEWLPNNIGHV), 418-441 (LPNISHLNLSNNGFQGNLPSSFSE), 443-466 (KKIFFLDLSHNNLSGSLPKKFCIG), 468-491 (SSLSILKLSYNRFSGKIFPQPMKL), 492-514 (ESLRVLIADNNQFTEITDVLIHS), 516-535 (GLVFLELSNNSLQGVIPSWF), 536-560 (GGFYFLYLSVSDNLLNGTIPSTLFN), 561-583 (VSFQLLDLSRNKFSGNLPSHFSF), 585-605 (HMGLLYLHDNEFSGPVPSTLL), 606-629 (ENVMLLDLRNNKLSGTIPRFVSNR), 631-652 (FLYLLLRGNALTGHIPTSLCEL), 653-676 (KSIRVLDLANNRLNGSIPPCLNNV), 745-769 (FKFMFGLDFSSNELIGEIPRELGDF), 770-792 (QRIRALNLSHNSLSGLVPESFSN), 794-817 (TDIESIDLSFNVLHGPIPHDLTKL), and 819-842 (YIVVFNVSYNNLSGLIPSQGKFLS). An N-linked (GlcNAc...) asparagine glycan is attached at asparagine 140. N-linked (GlcNAc...) asparagine glycans are attached at residues asparagine 261 and asparagine 295. N-linked (GlcNAc...) asparagine glycans are attached at residues asparagine 352 and asparagine 380. Asparagine 420, asparagine 425, and asparagine 454 each carry an N-linked (GlcNAc...) asparagine glycan. 3 N-linked (GlcNAc...) asparagine glycosylation sites follow: asparagine 524, asparagine 551, and asparagine 560. N-linked (GlcNAc...) asparagine glycans are attached at residues asparagine 666 and asparagine 675. 2 N-linked (GlcNAc...) asparagine glycosylation sites follow: asparagine 776 and asparagine 792. Asparagine 824, asparagine 829, asparagine 860, and asparagine 866 each carry an N-linked (GlcNAc...) asparagine glycan. A helical transmembrane segment spans residues 889 to 909 (FYWSLFATYGITWMAFIVFLC). The Cytoplasmic portion of the chain corresponds to 910 to 932 (FDSPWRQAWFRLVNVFVSFLKCV).

This sequence belongs to the RLP family.

It is found in the cell membrane. The polypeptide is Receptor-like protein 9a (Arabidopsis thaliana (Mouse-ear cress)).